A 290-amino-acid chain; its full sequence is Agmatinase (290 aa).

6 residues coordinate Mn(2+): H112, D135, H137, D139, D216, and D218.

This sequence belongs to the arginase family. Agmatinase subfamily. Mn(2+) is required as a cofactor.

The enzyme catalyses agmatine + H2O = urea + putrescine. Its pathway is amine and polyamine biosynthesis; putrescine biosynthesis via agmatine pathway; putrescine from agmatine: step 1/1. In terms of biological role, catalyzes the formation of putrescine from agmatine. This Bacillus subtilis (strain 168) protein is Agmatinase (speB).